The chain runs to 270 residues: Type III pantothenate kinase (270 aa).

Residue 11-18 participates in ATP binding; that stretch reads DAGNSRIK. Residues Tyr96 and 103-106 each bind substrate; that span reads GSDR. Asp105 (proton acceptor) is an active-site residue. An ATP-binding site is contributed by Thr129. Residue Thr195 coordinates substrate.

Belongs to the type III pantothenate kinase family. As to quaternary structure, homodimer. Requires NH4(+) as cofactor. K(+) serves as cofactor.

The protein resides in the cytoplasm. It catalyses the reaction (R)-pantothenate + ATP = (R)-4'-phosphopantothenate + ADP + H(+). The protein operates within cofactor biosynthesis; coenzyme A biosynthesis; CoA from (R)-pantothenate: step 1/5. Catalyzes the phosphorylation of pantothenate (Pan), the first step in CoA biosynthesis. The sequence is that of Type III pantothenate kinase from Paraburkholderia phytofirmans (strain DSM 17436 / LMG 22146 / PsJN) (Burkholderia phytofirmans).